A 344-amino-acid polypeptide reads, in one-letter code: F-box protein HRT3 (344 aa).

A TPR repeat occupies 14–47; the sequence is AIAIWEKGVLKEKDGSMSDAINFYRSALKIHDNV. Residues 98-148 enclose the F-box domain; sequence WILEILPDDILLRIIKKVILMSGESWVNLSMTCSTFSKLCFHDSVPFKTFA.

Interacts with SKP1. Component of the probable SCF(HRT3) complex containing CDC53, SKP1, RBX1 and HRT3.

The protein operates within protein modification; protein ubiquitination. Its function is as follows. Substrate recognition component of a SCF (SKP1-CUL1-F-box protein) E3 ubiquitin-protein ligase complex which mediates the ubiquitination and subsequent proteasomal degradation of target proteins. Probably recognizes and binds to phosphorylated target proteins. The sequence is that of F-box protein HRT3 (HRT3) from Saccharomyces cerevisiae (strain ATCC 204508 / S288c) (Baker's yeast).